A 252-amino-acid chain; its full sequence is MFYDFVPQSRFLLGTAGYPSPQILQQAVMASESEIITVSLRREGSQGGAFRELLTQLNKRILPNTAGCHTVKEAVTTAHMARELFNTRWIKLEVIGHADTLQPDPFALVEAARILCADGFQVFPYTTEDLILGEKLLEAGCELLMPWGAPIGSGQGLRNIEGLRSMRLWFKDIPLIIDAGIGAPSQAAQAMEMGFDGILLNTAVARAQDPLRMAQAFAAAVRAGYDAHGAGLIERRDMATASTPIFGMAQFS.

The Schiff-base intermediate with DXP role is filled by Lys91. 1-deoxy-D-xylulose 5-phosphate-binding positions include Gly152, 179–180, and 201–202; these read AG and NT.

Belongs to the ThiG family. Homotetramer. Forms heterodimers with either ThiH or ThiS.

The protein resides in the cytoplasm. It carries out the reaction [ThiS sulfur-carrier protein]-C-terminal-Gly-aminoethanethioate + 2-iminoacetate + 1-deoxy-D-xylulose 5-phosphate = [ThiS sulfur-carrier protein]-C-terminal Gly-Gly + 2-[(2R,5Z)-2-carboxy-4-methylthiazol-5(2H)-ylidene]ethyl phosphate + 2 H2O + H(+). It participates in cofactor biosynthesis; thiamine diphosphate biosynthesis. In terms of biological role, catalyzes the rearrangement of 1-deoxy-D-xylulose 5-phosphate (DXP) to produce the thiazole phosphate moiety of thiamine. Sulfur is provided by the thiocarboxylate moiety of the carrier protein ThiS. In vitro, sulfur can be provided by H(2)S. The sequence is that of Thiazole synthase from Erwinia pyrifoliae (strain DSM 12162 / Ep1/96).